A 353-amino-acid polypeptide reads, in one-letter code: Photosystem II protein D1 (353 aa).

The residue at position 2 (Thr-2) is an N-acetylthreonine. At Thr-2 the chain carries Phosphothreonine. Transmembrane regions (helical) follow at residues 29–46, 118–133, and 142–156; these read YIGW…TATS, HFLL…EWEL, and WIAV…AATA. Chlorophyll a is bound at residue His-118. Tyr-126 lines the pheophytin a pocket. [CaMn4O5] cluster contacts are provided by Asp-170 and Glu-189. The chain crosses the membrane as a helical span at residues 197-218; the sequence is FHMLGVAGVFGGSLFSAMHGSL. Residue His-198 coordinates chlorophyll a. A quinone is bound by residues His-215 and 264-265; that span reads SF. His-215 is a binding site for Fe cation. Residue His-272 participates in Fe cation binding. Residues 274–288 traverse the membrane as a helical segment; that stretch reads FLAAWPVVGIWFTAL. Residues His-332, Glu-333, Asp-342, and Ala-344 each contribute to the [CaMn4O5] cluster site. Positions 345–353 are excised as a propeptide; the sequence is AVEAPSTNG.

Belongs to the reaction center PufL/M/PsbA/D family. PSII is composed of 1 copy each of membrane proteins PsbA, PsbB, PsbC, PsbD, PsbE, PsbF, PsbH, PsbI, PsbJ, PsbK, PsbL, PsbM, PsbT, PsbX, PsbY, PsbZ, Psb30/Ycf12, at least 3 peripheral proteins of the oxygen-evolving complex and a large number of cofactors. It forms dimeric complexes. The cofactor is The D1/D2 heterodimer binds P680, chlorophylls that are the primary electron donor of PSII, and subsequent electron acceptors. It shares a non-heme iron and each subunit binds pheophytin, quinone, additional chlorophylls, carotenoids and lipids. D1 provides most of the ligands for the Mn4-Ca-O5 cluster of the oxygen-evolving complex (OEC). There is also a Cl(-1) ion associated with D1 and D2, which is required for oxygen evolution. The PSII complex binds additional chlorophylls, carotenoids and specific lipids.. Post-translationally, tyr-161 forms a radical intermediate that is referred to as redox-active TyrZ, YZ or Y-Z. C-terminally processed by CTPA; processing is essential to allow assembly of the oxygen-evolving complex and thus photosynthetic growth.

The protein localises to the plastid. It is found in the chloroplast thylakoid membrane. It catalyses the reaction 2 a plastoquinone + 4 hnu + 2 H2O = 2 a plastoquinol + O2. Functionally, photosystem II (PSII) is a light-driven water:plastoquinone oxidoreductase that uses light energy to abstract electrons from H(2)O, generating O(2) and a proton gradient subsequently used for ATP formation. It consists of a core antenna complex that captures photons, and an electron transfer chain that converts photonic excitation into a charge separation. The D1/D2 (PsbA/PsbD) reaction center heterodimer binds P680, the primary electron donor of PSII as well as several subsequent electron acceptors. This is Photosystem II protein D1 from Lepidium virginicum (Virginia pepperweed).